The following is a 235-amino-acid chain: Carboxymethylenebutenolidase 2 (235 aa).

Residues Cys-117, Asp-173, and His-204 contribute to the active site.

It belongs to the dienelactone hydrolase family. As to quaternary structure, monomer.

It catalyses the reaction 2-(5-oxo-2,5-dihydrofuran-2-ylidene)acetate + H2O = 4-oxohex-2-enedioate + H(+). It functions in the pathway aromatic compound metabolism; 3-chlorocatechol degradation. Ring cleavage of cyclic ester dienelactone to produce maleylacetate. The protein is Carboxymethylenebutenolidase 2 (tfdEII) of Cupriavidus pinatubonensis (strain JMP 134 / LMG 1197) (Cupriavidus necator (strain JMP 134)).